Consider the following 642-residue polypeptide: Polyglycine hydrolase (642 aa).

The N-terminal stretch at 1–23 (MYTSRLLLSNLASCLSLATLVAS) is a signal peptide. 4 N-linked (GlcNAc...) asparagine glycosylation sites follow: N37, N100, N159, and N341. Cysteines 149 and 183 form a disulfide. S370 is an active-site residue. Residues N390, N407, N444, N487, and N494 are each glycosylated (N-linked (GlcNAc...) asparagine).

The protein belongs to the peptidase S12 family.

It is found in the secreted. It catalyses the reaction a glycyl-glycyl-[protein] + H2O = N-terminal glycyl-[protein] + [protein]-C-terminal glycine. Its activity is regulated as follows. Not inhibited by phenylmethylsulfonyl fluoride (PMSF; serine peptidase class S1 inhibitor), clavulanic acid (beta-lactamase inhibitor) or ampicillin (penicillin-binding protein (PBP) inhibitor). Its function is as follows. Serine-type endopeptidase that cleaves Gly-Gly bonds in the polyglycine linker of host plant class IV chitinases to disrupt their chitin-binding, and thereby plays a role in lowering the defense responses of the host to the fungus. Degrades Z.mays Endochitinase A (CHIA). Degrades Z.mays Endochitinase B (CHIB). Has no activity on Z.mays CHIA following CHIA cleavage by fungalysin. In Epicoccum sorghinum (Endophyte fungus), this protein is Polyglycine hydrolase.